Consider the following 219-residue polypeptide: Ribose-5-phosphate isomerase A (219 aa).

Residues 28–31, 81–84, and 94–97 contribute to the substrate site; these read SGST, DGAD, and KGGG. The active-site Proton acceptor is the Glu-103. Lys-121 lines the substrate pocket.

It belongs to the ribose 5-phosphate isomerase family. As to quaternary structure, homodimer.

It carries out the reaction aldehydo-D-ribose 5-phosphate = D-ribulose 5-phosphate. Its pathway is carbohydrate degradation; pentose phosphate pathway; D-ribose 5-phosphate from D-ribulose 5-phosphate (non-oxidative stage): step 1/1. In terms of biological role, catalyzes the reversible conversion of ribose-5-phosphate to ribulose 5-phosphate. The polypeptide is Ribose-5-phosphate isomerase A (Actinobacillus pleuropneumoniae serotype 5b (strain L20)).